The primary structure comprises 743 residues: Phosphoribosylformylglycinamidine synthase subunit PurL (743 aa).

Histidine 50 is an active-site residue. Positions 53 and 92 each coordinate ATP. Glutamate 94 lines the Mg(2+) pocket. Substrate is bound by residues 95–98 (SHNH) and arginine 117. Histidine 96 functions as the Proton acceptor in the catalytic mechanism. Position 118 (aspartate 118) interacts with Mg(2+). Glutamine 241 is a binding site for substrate. Aspartate 269 provides a ligand contact to Mg(2+). 313–315 (ESQ) serves as a coordination point for substrate. Positions 495 and 532 each coordinate ATP. Mg(2+) is bound at residue asparagine 533. Position 535 (serine 535) interacts with substrate.

Belongs to the FGAMS family. In terms of assembly, monomer. Part of the FGAM synthase complex composed of 1 PurL, 1 PurQ and 2 PurS subunits.

Its subcellular location is the cytoplasm. The catalysed reaction is N(2)-formyl-N(1)-(5-phospho-beta-D-ribosyl)glycinamide + L-glutamine + ATP + H2O = 2-formamido-N(1)-(5-O-phospho-beta-D-ribosyl)acetamidine + L-glutamate + ADP + phosphate + H(+). Its pathway is purine metabolism; IMP biosynthesis via de novo pathway; 5-amino-1-(5-phospho-D-ribosyl)imidazole from N(2)-formyl-N(1)-(5-phospho-D-ribosyl)glycinamide: step 1/2. Functionally, part of the phosphoribosylformylglycinamidine synthase complex involved in the purines biosynthetic pathway. Catalyzes the ATP-dependent conversion of formylglycinamide ribonucleotide (FGAR) and glutamine to yield formylglycinamidine ribonucleotide (FGAM) and glutamate. The FGAM synthase complex is composed of three subunits. PurQ produces an ammonia molecule by converting glutamine to glutamate. PurL transfers the ammonia molecule to FGAR to form FGAM in an ATP-dependent manner. PurS interacts with PurQ and PurL and is thought to assist in the transfer of the ammonia molecule from PurQ to PurL. This chain is Phosphoribosylformylglycinamidine synthase subunit PurL, found in Rhizobium leguminosarum bv. trifolii (strain WSM2304).